A 301-amino-acid polypeptide reads, in one-letter code: Recombination-associated protein RdgC (301 aa).

Belongs to the RdgC family.

The protein resides in the cytoplasm. It is found in the nucleoid. May be involved in recombination. This Xanthomonas axonopodis pv. citri (strain 306) protein is Recombination-associated protein RdgC.